An 810-amino-acid polypeptide reads, in one-letter code: Plasminogen (810 aa).

An N-terminal signal peptide occupies residues 1-19; sequence MEHKEVVLLLLLFLKSGQG. The 79-residue stretch at 20–98 folds into the PAN domain; that stretch reads EPLDDYVNTQ…RDVVLFEKKV (79 aa). 12 disulfides stabilise this stretch: cysteine 49–cysteine 73, cysteine 53–cysteine 61, cysteine 103–cysteine 181, cysteine 124–cysteine 164, cysteine 152–cysteine 176, cysteine 185–cysteine 262, cysteine 188–cysteine 316, cysteine 206–cysteine 245, cysteine 234–cysteine 257, cysteine 275–cysteine 352, cysteine 296–cysteine 335, and cysteine 324–cysteine 347. 3 Kringle domains span residues 103 to 181, 184 to 262, and 275 to 352; these read CKTG…IPEC, ACMH…IPRC, and CLKG…IPSC. Residues 126–145 are disordered; it reads KWSSTSPHRPRFSPATHPSE. Residues arginine 136, aspartate 158, and arginine 172 each contribute to the L-lysine site. The O-linked (GalNAc...) threonine glycan is linked to threonine 365. 9 disulfides stabilise this stretch: cysteine 377-cysteine 454, cysteine 398-cysteine 437, cysteine 426-cysteine 449, cysteine 481-cysteine 560, cysteine 502-cysteine 543, cysteine 531-cysteine 555, cysteine 567-cysteine 685, cysteine 577-cysteine 585, and cysteine 607-cysteine 623. 2 Kringle domains span residues 377–454 and 481–560; these read CYHG…LKKC and CMFG…VPQC. L-lysine-binding residues include aspartate 432 and arginine 445. The region spanning 581–808 is the Peptidase S1 domain; the sequence is VVGGCVANAH…FVTWIEGVMR (228 aa). Serine 597 carries the post-translational modification Phosphoserine. Catalysis depends on charge relay system residues histidine 622 and aspartate 665. Serine 688 is modified (phosphoserine). 3 disulfide bridges follow: cysteine 699/cysteine 766, cysteine 729/cysteine 745, and cysteine 756/cysteine 784. Serine 760 serves as the catalytic Charge relay system.

Belongs to the peptidase S1 family. Plasminogen subfamily. As to quaternary structure, interacts with CSPG4 and AMOT. Interacts (via the Kringle domains) with HRG; the interaction tethers PLG to the cell surface and enhances its activation. Interacts (via Kringle 4 domain) with ADA; the interaction stimulates PLG activation when in complex with DPP4. Angiostatin: Interacts with ATP5F1A; the interaction inhibits most of the angiogenic effects of angiostatin. In terms of processing, in the presence of the inhibitor, the activation involves only cleavage after Arg-580, yielding two chains held together by two disulfide bonds. In the absence of the inhibitor, the activation involves additionally the removal of the activation peptide.

The protein resides in the secreted. The enzyme catalyses Preferential cleavage: Lys-|-Xaa &gt; Arg-|-Xaa, higher selectivity than trypsin. Converts fibrin into soluble products.. Its activity is regulated as follows. Converted into plasmin by plasminogen activators, both plasminogen and its activator being bound to fibrin. Activated with catalytic amounts of streptokinase. In terms of biological role, plasmin dissolves the fibrin of blood clots and acts as a proteolytic factor in a variety of other processes including embryonic development, tissue remodeling, tumor invasion, and inflammation. In ovulation, weakens the walls of the Graafian follicle. It activates the urokinase-type plasminogen activator, collagenases and several complement zymogens, such as C1, C4 and C5. Cleavage of fibronectin and laminin leads to cell detachment and apoptosis. Also cleaves fibrin, thrombospondin and von Willebrand factor. Its role in tissue remodeling and tumor invasion may be modulated by CSPG4. Binds to cells. The chain is Plasminogen (PLG) from Pongo abelii (Sumatran orangutan).